The sequence spans 469 residues: Pancreatic lipase-related protein 2 (469 aa).

The N-terminal stretch at 1–17 (MLPSWTIGLLLLATVRG) is a signal peptide. C21 and C27 are joined by a disulfide. N71 carries N-linked (GlcNAc...) asparagine glycosylation. The interval 93-105 (IHGFIDDGDSGWP) is required for galactolipase activity. The cysteines at positions 109 and 120 are disulfide-linked. S171 functions as the Nucleophile in the catalytic mechanism. The active-site Charge relay system is the D195. Residues E206, R209, D211, and D214 each contribute to the Ca(2+) site. A disulfide bridge connects residues C256 and C280. The segment at 257 to 279 (QKNILSTIIDINGIWQGIQDFVA) is required for galactolipase activity. The Charge relay system role is filled by H282. 2 disulfide bridges follow: C304/C315 and C318/C323. N353, N399, and N455 each carry an N-linked (GlcNAc...) asparagine glycan. The region spanning 357–469 (WRYRVSVTLA…ENALQTLYPC (113 aa)) is the PLAT domain. Cysteines 453 and 469 form a disulfide.

The protein belongs to the AB hydrolase superfamily. Lipase family.

The protein resides in the secreted. It localises to the zymogen granule membrane. The protein localises to the cell projection. Its subcellular location is the neuron projection. It catalyses the reaction a triacylglycerol + H2O = a diacylglycerol + a fatty acid + H(+). It carries out the reaction a 1,2-diacyl-3-O-(beta-D-galactosyl)-sn-glycerol + 2 H2O = 3-beta-D-galactosyl-sn-glycerol + 2 a fatty acid + 2 H(+). The enzyme catalyses 1,2,3-tri-(9Z-octadecenoyl)-glycerol + H2O = di-(9Z)-octadecenoylglycerol + (9Z)-octadecenoate + H(+). The catalysed reaction is di-(9Z)-octadecenoylglycerol + H2O = (9Z-octadecenoyl)-glycerol + (9Z)-octadecenoate + H(+). It catalyses the reaction (9Z-octadecenoyl)-glycerol + H2O = glycerol + (9Z)-octadecenoate + H(+). It carries out the reaction 1-(9Z-octadecenoyl)-glycerol + H2O = glycerol + (9Z)-octadecenoate + H(+). The enzyme catalyses 1,2,3-tripropanoylglycerol + H2O = dipropanoylglycerol + propanoate + H(+). The catalysed reaction is 1,2,3-tributanoylglycerol + H2O = dibutanoylglycerol + butanoate + H(+). It catalyses the reaction 1,2,3-trioctanoylglycerol + H2O = dioctanoylglycerol + octanoate + H(+). It carries out the reaction 1,2-didecanoylglycerol + H2O = decanoylglycerol + decanoate + H(+). The enzyme catalyses long chain 1,2-diacyl-3-O-beta-D-galactosyl-sn-glycerol + H2O = long chain acyl-3-O-beta-D-galactosyl-sn-glycerol + a fatty acid + H(+). The catalysed reaction is 1,2-dioctanoyl-3-O-beta-D-galactosyl-sn-glycerol + H2O = octanoyl-3-(beta-D-galactosyl)-sn-glycerol + octanoate + H(+). It catalyses the reaction 1,2-didodecanoyl-3-beta-D-galactosyl-sn-glycerol + H2O = dodecanoyl-3-beta-D-galactosyl-sn-glycerol + dodecanoate + H(+). It carries out the reaction 1-beta-D-galactosyl-2,3-didodecanoyl-sn-glycerol + H2O = 1-beta-D-galactosyl-dodecanoyl-sn-glycerol + dodecanoate + H(+). The enzyme catalyses a 1,2-diacyl-3-O-[alpha-D-galactosyl-(1-&gt;6)-beta-D-galactosyl]-sn-glycerol + H2O = acyl-3-O-[alpha-D-galactosyl-(1-&gt;6)-beta-D-galactosyl]-sn-glycerol + a fatty acid + H(+). The catalysed reaction is long chain 1,2-diacyl-3-O-[alpha-D-galactosyl-(1-&gt;6)-beta-D-galactosyl]-sn-glycerol + H2O = long chain acyl-3-O-[alpha-D-galactosyl-(1-&gt;6)-beta-D-galactosyl]-sn-glycerol + a fatty acid + H(+). It catalyses the reaction 1,2-dioctanoyl-3-O-[alpha-D-galactosyl-(1-&gt;6)-beta-D-galactosyl]-sn-glycerol + H2O = octanoyl-3-O-[alpha-D-galactosyl-(1-&gt;6)-beta-D-galactosyl]-sn-glycerol + octanoate + H(+). It carries out the reaction 1,2-didodecanoyl-3-O-[alpha-D-galactosyl-(1-&gt;6)-beta-D-galactosyl]-sn-glycerol + H2O = dodecanoyl-3-O-[alpha-D-galactosyl-(1-&gt;6)-beta-D-galactosyl]-sn-glycerol + dodecanoate + H(+). The enzyme catalyses a 1,2-diacyl-sn-glycero-3-phosphocholine + H2O = a monoacyl-sn-glycero-3-phosphocholine + a fatty acid + H(+). It functions in the pathway glycerolipid metabolism; triacylglycerol degradation. The protein operates within glycolipid metabolism. Functionally, lipase that primarily hydrolyzes triglycerides and galactosylglycerides. In neonates, may play a major role in pancreatic digestion of dietary fats such as milk fat globules enriched in long-chain triglycerides. Hydrolyzes short-, medium- and long-chain fatty acyls in triglycerides without apparent positional specificity. Can completely deacylate triacylglycerols. When the liver matures and bile salt synthesis increases, likely functions mainly as a galactolipase and monoacylglycerol lipase. Hydrolyzes monogalactosyldiglycerols (MGDG) and digalactosyldiacylglycerols (DGDG) present in a plant-based diet, releasing long-chain polyunsaturated fatty acids. Hydrolyzes medium- and long-chain fatty acyls in galactolipids. May act together with LIPF to hydrolyze partially digested triglycerides. Hydrolyzes long-chain monoglycerides with high efficiency. In cytotoxic T cells, contributes to perforin-dependent cell lysis, but is unlikely to mediate direct cytotoxicity. Also has low phospholipase activity. In neurons, required for the localization of the phospholipid 1-oleoyl-2-palmitoyl-PC (OPPC) to neurite tips through acyl chain remodeling of membrane phospholipids. The resulting OPPC-rich lipid membrane domain recruits the t-SNARE protein STX4 by selectively interacting with the STX4 transmembrane domain and this promotes surface expression of the dopamine transporter SLC6A3/DAT at neurite tips by facilitating fusion of SLC6A3-containing transport vesicles with the plasma membrane. In Bos taurus (Bovine), this protein is Pancreatic lipase-related protein 2.